A 436-amino-acid chain; its full sequence is F-box/LRR-repeat protein 20 (436 aa).

The region spanning 22-68 (AVINKKLPKELLLRIFSFLDVVTLCRCAQVSRAWNVLALDGSNWQRI) is the F-box domain. LRR repeat units follow at residues 74–100 (QRDIEGRVVENISKRCGGFLRKLSLRG), 101–126 (CLGVGDNALRTFAQNCRNIEVLNLNG), 127–152 (CTKTTDATCTSLSKFCSKLRHLDLAS), 153–178 (CTSITNMSLKALSEGCPLLEQLNISW), 179–204 (CDQVTKDGIQALVRGCGGLKALFLKG), 205–230 (CTQLEDEALKYIGAHCPELVTLNLQT), 231–256 (CLQITDEGLITICRGCHKLQSLCASG), 257–282 (CSNITDAILNALGQNCPRLRILEVAR), 283–308 (CSQLTDVGFTTLARNCHELEKMDLEE), 309–334 (CVQITDSTLIQLSIHCPRLQVLSLSH), 335–363 (CELITDDGIRHLGNGACAHDQLEVIELDN), 364–388 (CPLITDASLEHLKSCHSLERIELYD), and 389–414 (CQQITRAGIKRLRTHLPNIKVHAYFA). Threonine 417 carries the post-translational modification Phosphothreonine. A Phosphoserine modification is found at serine 421.

In terms of assembly, interacts with SKP1 and CUL1.

It localises to the cytoplasm. Substrate-recognition component of the SCF (SKP1-CUL1-F-box protein)-type E3 ubiquitin ligase complex. Role in neural transmission. The chain is F-box/LRR-repeat protein 20 (FBXL20) from Bos taurus (Bovine).